A 276-amino-acid polypeptide reads, in one-letter code: NAD-capped RNA hydrolase NudC (276 aa).

Substrate is bound at residue R82. The Zn(2+) site is built by C112 and C115. Residue E125 coordinates substrate. Zn(2+) is bound by residues C130 and C133. Y138 serves as a coordination point for substrate. Residues 139-262 (PRISPSMIVL…SIARYLIDLY (124 aa)) enclose the Nudix hydrolase domain. A172, E188, and E192 together coordinate a divalent metal cation. The Nudix box signature appears at 173–194 (GFAEPGESAEDCLVREVREEVA). 206 to 213 (QCWPFPHS) lines the substrate pocket. E233 is a binding site for a divalent metal cation. A255 provides a ligand contact to substrate.

This sequence belongs to the Nudix hydrolase family. NudC subfamily. As to quaternary structure, homodimer. Requires Mg(2+) as cofactor. It depends on Mn(2+) as a cofactor. Zn(2+) is required as a cofactor.

The catalysed reaction is a 5'-end NAD(+)-phospho-ribonucleoside in mRNA + H2O = a 5'-end phospho-adenosine-phospho-ribonucleoside in mRNA + beta-nicotinamide D-ribonucleotide + 2 H(+). It carries out the reaction NAD(+) + H2O = beta-nicotinamide D-ribonucleotide + AMP + 2 H(+). The enzyme catalyses NADH + H2O = reduced beta-nicotinamide D-ribonucleotide + AMP + 2 H(+). In terms of biological role, mRNA decapping enzyme that specifically removes the nicotinamide adenine dinucleotide (NAD) cap from a subset of mRNAs by hydrolyzing the diphosphate linkage to produce nicotinamide mononucleotide (NMN) and 5' monophosphate mRNA. The NAD-cap is present at the 5'-end of some mRNAs and stabilizes RNA against 5'-processing. Has preference for mRNAs with a 5'-end purine. Catalyzes the hydrolysis of a broad range of dinucleotide pyrophosphates. The chain is NAD-capped RNA hydrolase NudC from Pseudomonas putida (strain ATCC 700007 / DSM 6899 / JCM 31910 / BCRC 17059 / LMG 24140 / F1).